The following is a 513-amino-acid chain: ATP synthase subunit alpha (513 aa).

169–176 provides a ligand contact to ATP; it reads GDRQIGKT.

This sequence belongs to the ATPase alpha/beta chains family. F-type ATPases have 2 components, CF(1) - the catalytic core - and CF(0) - the membrane proton channel. CF(1) has five subunits: alpha(3), beta(3), gamma(1), delta(1), epsilon(1). CF(0) has three main subunits: a(1), b(2) and c(9-12). The alpha and beta chains form an alternating ring which encloses part of the gamma chain. CF(1) is attached to CF(0) by a central stalk formed by the gamma and epsilon chains, while a peripheral stalk is formed by the delta and b chains.

Its subcellular location is the cell inner membrane. It carries out the reaction ATP + H2O + 4 H(+)(in) = ADP + phosphate + 5 H(+)(out). Produces ATP from ADP in the presence of a proton gradient across the membrane. The alpha chain is a regulatory subunit. This chain is ATP synthase subunit alpha, found in Francisella tularensis subsp. holarctica (strain OSU18).